A 293-amino-acid chain; its full sequence is tRNA pseudouridine synthase B (293 aa).

The Nucleophile role is filled by D38.

It belongs to the pseudouridine synthase TruB family. Type 1 subfamily.

The enzyme catalyses uridine(55) in tRNA = pseudouridine(55) in tRNA. Its function is as follows. Responsible for synthesis of pseudouridine from uracil-55 in the psi GC loop of transfer RNAs. The chain is tRNA pseudouridine synthase B from Trichormus variabilis (strain ATCC 29413 / PCC 7937) (Anabaena variabilis).